An 815-amino-acid chain; its full sequence is Minichromosome loss protein 1 (815 aa).

WD repeat units follow at residues 11–50 (AHTD…EPDS), 53–90 (NHQD…EHTL), 93–132 (RTTL…QIFS), 135–174 (PAKA…LIKF), and 228–267 (ENHS…VVVE). The disordered stretch occupies residues 306-362 (LKEENDPTKPLTSSKSKNRTSKELDDLFGSDDEQSQNVNDLDGNSANEENEFINHDG). Over residues 340–352 (SQNVNDLDGNSAN) the composition is skewed to polar residues. The stretch at 517-553 (ENESPVTISLSSSVVLVCTSAGYVRVFSRQGFPISIH) is one WD 6 repeat.

As to quaternary structure, interacts with pof3 and pol1.

Its subcellular location is the nucleus. The protein localises to the chromosome. Has a role in regulating DNA replication complexes. Acts as a regulator of post DNA replication initiation. Associates with chromatin during G1 and S phases of mitosis. Required for the transcriptional repression of the outer repeats of the centromeric region. Acts as a polymerase alpha replication accessory factor and is important for S-phase DNA damage survival. Plays a role in lagging-strand synthesis and Ozaki fragment processing, in addition to DNA repair. The chain is Minichromosome loss protein 1 (mcl1) from Schizosaccharomyces pombe (strain 972 / ATCC 24843) (Fission yeast).